The chain runs to 623 residues: Hemagglutinin component HA-70 type D (623 aa).

As to quaternary structure, botulinum toxins are produced as large progenitor toxins of 12S (M toxin, about 280 kDa) and 16S (L toxin, about 650 kDa). M toxin consists of a non-toxic, non-hemagglutinin component (NTNHA) and the neurotoxin (BoNT/D). L toxin consists of the M toxin and the 3 hemagglutinin (HA) subcomponents of 70, 33, and 17 kDa. The stoichiometry of the whole complex has been modeled as one BoNT/D, one NTNHA, three HA-70, six HA-33 and three HA-17. HA-33 and HA-17 crystallize as a heterotrimer with two HA-33 and one HA-17. Limited treatment of L toxin with pepsin or trypsin produces shorter HA-70 proteins (called HA-55, HA-23 and HA-22) sometimes observed in vivo in other strains of type C and D botulinum toxin preparations.

It localises to the secreted. In terms of biological role, the hemagglutinin (HA) component of the progenitor toxin protects the structural integrity of the neurotoxin; may increase internalization of the neurotoxin into the bloodstream of the host. Involved in binding to the small intestine through interactions with glycolipids and glycoproteins containing sialic acid moieties. Erythrocyte agglutination only occurs when the entire complex is assembled. This HA subunit probably connects toxin/NTNHA to HA-33 and HA-17, the other components of the HA complex, and it may also protect the M toxin from proteolysis upon secretion. In Clostridium botulinum D phage (Clostridium botulinum D bacteriophage), this protein is Hemagglutinin component HA-70 type D.